Reading from the N-terminus, the 126-residue chain is Adenosine 5'-monophosphoramidase HINT1 (126 aa).

A2 carries the post-translational modification N-acetylalanine. Positions 18 to 126 (IFGKIIRKEI…GGRQMNWPPG (109 aa)) constitute an HIT domain. 2 positions are modified to N6-acetyllysine: K21 and K30. Residue 43–44 (DI) coordinates AMP. Phosphoserine occurs at positions 45 and 72. AMP contacts are provided by residues N99, 105–107 (GQS), and 112–114 (HLH). Residues 110–114 (HIHLH) carry the Histidine triad motif motif. The active-site Tele-AMP-histidine intermediate is the H112.

It belongs to the HINT family. In terms of assembly, homodimer. Interacts with CDK7. Interacts with RUVBL1 and RUVBL2 and is associated with the LEF1/TCF1-CTNNB1 complex and with a KAT5 histone acetyltransferase complex. Identified in a complex with MITF and CTNNB1. Interacts with CDC34 and RBX1, and is part of a SCF (SKP2-CUL1-F-box protein) E3 ubiquitin-protein ligase complex. Interacts with SUMO1, SUMO2 and RGS17. Interacts with the Ten-1 ICD form of TENM1. Interacts with CALM1; interaction increases in the presence of calcium ions.

It is found in the cytoplasm. It localises to the nucleus. The catalysed reaction is adenosine 5'-phosphoramidate + H2O = AMP + NH4(+). Exhibits adenosine 5'-monophosphoramidase activity, hydrolyzing purine nucleotide phosphoramidates with a single phosphate group such as adenosine 5'monophosphoramidate (AMP-NH2) to yield AMP and NH2. Hydrolyzes adenosine 5'monophosphomorpholidate (AMP-morpholidate) and guanosine 5'monophosphomorpholidate (GMP-morpholidate). Hydrolyzes lysyl-AMP (AMP-N-epsilon-(N-alpha-acetyl lysine methyl ester)) generated by lysine tRNA ligase, as well as Met-AMP, His-AMP and Asp-AMP, lysyl-GMP (GMP-N-epsilon-(N-alpha-acetyl lysine methyl ester)) and AMP-N-alanine methyl ester. Can also convert adenosine 5'-O-phosphorothioate and guanosine 5'-O-phosphorothioate to the corresponding nucleoside 5'-O-phosphates with concomitant release of hydrogen sulfide. In addition, functions as a scaffolding protein that modulates transcriptional activation by the LEF1/TCF1-CTNNB1 complex and by the complex formed with MITF and CTNNB1. Modulates p53/TP53 levels and p53/TP53-mediated apoptosis. Modulates proteasomal degradation of target proteins by the SCF (SKP2-CUL1-F-box protein) E3 ubiquitin-protein ligase complex. Also exhibits SUMO-specific isopeptidase activity, deconjugating SUMO1 from RANGAP1 and RGS17. In Rattus norvegicus (Rat), this protein is Adenosine 5'-monophosphoramidase HINT1 (Hint1).